Reading from the N-terminus, the 87-residue chain is Translation initiation factor IF-1 2 (87 aa).

The region spanning 1 to 72 (MAKEELLEMQ…SKGRITFRHI (72 aa)) is the S1-like domain.

The protein belongs to the IF-1 family. In terms of assembly, component of the 30S ribosomal translation pre-initiation complex which assembles on the 30S ribosome in the order IF-2 and IF-3, IF-1 and N-formylmethionyl-tRNA(fMet); mRNA recruitment can occur at any time during PIC assembly.

The protein localises to the cytoplasm. In terms of biological role, one of the essential components for the initiation of protein synthesis. Stabilizes the binding of IF-2 and IF-3 on the 30S subunit to which N-formylmethionyl-tRNA(fMet) subsequently binds. Helps modulate mRNA selection, yielding the 30S pre-initiation complex (PIC). Upon addition of the 50S ribosomal subunit IF-1, IF-2 and IF-3 are released leaving the mature 70S translation initiation complex. The sequence is that of Translation initiation factor IF-1 2 from Dechloromonas aromatica (strain RCB).